We begin with the raw amino-acid sequence, 369 residues long: Flagellar P-ring protein (369 aa).

The signal sequence occupies residues 1–22 (MIKLKQLIAATLLLSTAFGVHA).

This sequence belongs to the FlgI family. The basal body constitutes a major portion of the flagellar organelle and consists of four rings (L,P,S, and M) mounted on a central rod.

It is found in the periplasm. Its subcellular location is the bacterial flagellum basal body. Its function is as follows. Assembles around the rod to form the L-ring and probably protects the motor/basal body from shearing forces during rotation. In Pseudomonas syringae pv. syringae (strain B728a), this protein is Flagellar P-ring protein.